The chain runs to 132 residues: Ribonuclease VapC15 (132 aa).

The PINc domain maps to 1–121; that stretch reads MIVDTSVWIA…HRDRDYEAIR (121 aa). D96 is a binding site for Mg(2+). Mn(2+) is bound by residues D96, D114, and D116.

This sequence belongs to the PINc/VapC protein family. Crystallizes as a VapB15-VapC15(2) heterotrimer and as a VapB15(2)-VapC15(2) heterotetramer; each toxin pair forms a homodimer which creates a channel in which the antitoxin binds. Mg(2+) is required as a cofactor. Requires Mn(2+) as cofactor.

With respect to regulation, RNase activity inhibited by EDTA. Toxic component of a type II toxin-antitoxin (TA) system. Degrades total E.coli RNA, which is partially inhibited by cognate antitoxin VapB15. Upon expression in M.smegmatis inhibits colony formation, which is neutralized by coexpression with VapB15. This Mycobacterium tuberculosis (strain ATCC 25618 / H37Rv) protein is Ribonuclease VapC15.